Here is a 617-residue protein sequence, read N- to C-terminus: Chaperone protein DnaK (617 aa).

Thr-174 carries the phosphothreonine; by autocatalysis modification. Over residues 575–592 (AQAQQQAQQQAQGQQGAQ) the composition is skewed to low complexity. A disordered region spans residues 575–617 (AQAQQQAQQQAQGQQGAQTDNQTGQNDGKTIDVDYEEVDDDDK). The segment covering 593 to 602 (TDNQTGQNDG) has biased composition (polar residues). Over residues 607–617 (VDYEEVDDDDK) the composition is skewed to acidic residues.

It belongs to the heat shock protein 70 family.

Acts as a chaperone. The polypeptide is Chaperone protein DnaK (Halothermothrix orenii (strain H 168 / OCM 544 / DSM 9562)).